We begin with the raw amino-acid sequence, 419 residues long: Effector protein BipC (419 aa).

Disordered regions lie at residues 62 to 94 (VAGSGAQRVELARPKPDAQTRATDRRTVSGLER) and 338 to 402 (LQSG…AKSQ). Composition is skewed to basic and acidic residues over residues 71 to 94 (ELARPKPDAQTRATDRRTVSGLER) and 380 to 392 (TRDEAAHRSREAA).

The protein belongs to the SctB/SipC family.

It is found in the secreted. This chain is Effector protein BipC (bipC), found in Burkholderia pseudomallei (strain 1710b).